Consider the following 81-residue polypeptide: Large ribosomal subunit protein bL31B (81 aa).

Belongs to the bacterial ribosomal protein bL31 family. Type B subfamily. As to quaternary structure, part of the 50S ribosomal subunit.

The chain is Large ribosomal subunit protein bL31B from Bacillus cereus (strain ATCC 10987 / NRS 248).